The sequence spans 136 residues: MILGIGSDFCDARRIEKSIERFGARFTERVFTPLERAKAERRARPAETYAKRFAAKEACAKALGTGIARGVFWRDMGVVNLPSGQPTLELTGGAAARLKEMVPEGYEPRIALSLTDEGPLSAAYVIISAELIGTPR.

Residues Asp8 and Glu57 each coordinate Mg(2+).

It belongs to the P-Pant transferase superfamily. AcpS family. The cofactor is Mg(2+).

It localises to the cytoplasm. The catalysed reaction is apo-[ACP] + CoA = holo-[ACP] + adenosine 3',5'-bisphosphate + H(+). In terms of biological role, transfers the 4'-phosphopantetheine moiety from coenzyme A to a Ser of acyl-carrier-protein. This Azorhizobium caulinodans (strain ATCC 43989 / DSM 5975 / JCM 20966 / LMG 6465 / NBRC 14845 / NCIMB 13405 / ORS 571) protein is Holo-[acyl-carrier-protein] synthase.